Reading from the N-terminus, the 840-residue chain is Probable inorganic carbon transporter subunit DabA (840 aa).

Zn(2+) contacts are provided by Cys355, Asp357, His539, and Cys554.

This sequence belongs to the inorganic carbon transporter (TC 9.A.2) DabA family. Forms a complex with DabB. The cofactor is Zn(2+).

The protein localises to the cell membrane. In terms of biological role, part of an energy-coupled inorganic carbon pump. The chain is Probable inorganic carbon transporter subunit DabA from Roseiflexus castenholzii (strain DSM 13941 / HLO8).